A 127-amino-acid polypeptide reads, in one-letter code: MNVPGDLRYTKDHEWVKLLADGATALVGITDFAQSELGDIVFVELKPEGTVLGEQEIFGTVEAVKTVADLFAPVAGTILELNGVLDAAETVNQDPYGEGWMVKMKVADPSSLDALMDAAAYTEMIGG.

Residues 24-105 (TALVGITDFA…YGEGWMVKMK (82 aa)) enclose the Lipoyl-binding domain. Residue K65 is modified to N6-lipoyllysine.

The protein belongs to the GcvH family. As to quaternary structure, the glycine cleavage system is composed of four proteins: P, T, L and H. Requires (R)-lipoate as cofactor.

Its function is as follows. The glycine cleavage system catalyzes the degradation of glycine. The H protein shuttles the methylamine group of glycine from the P protein to the T protein. This Chlorobium phaeovibrioides (strain DSM 265 / 1930) (Prosthecochloris vibrioformis (strain DSM 265)) protein is Glycine cleavage system H protein.